A 404-amino-acid polypeptide reads, in one-letter code: LL-diaminopimelate aminotransferase (404 aa).

Positions 15 and 42 each coordinate substrate. Pyridoxal 5'-phosphate is bound by residues Y72, 108–109 (AK), Y132, N188, Y219, and 247–249 (SFS). Positions 109, 132, and 188 each coordinate substrate. N6-(pyridoxal phosphate)lysine is present on K250. 2 residues coordinate pyridoxal 5'-phosphate: R258 and N288. 2 residues coordinate substrate: N288 and R384.

Belongs to the class-I pyridoxal-phosphate-dependent aminotransferase family. LL-diaminopimelate aminotransferase subfamily. In terms of assembly, homodimer. The cofactor is pyridoxal 5'-phosphate.

The catalysed reaction is (2S,6S)-2,6-diaminopimelate + 2-oxoglutarate = (S)-2,3,4,5-tetrahydrodipicolinate + L-glutamate + H2O + H(+). Its pathway is amino-acid biosynthesis; L-lysine biosynthesis via DAP pathway; LL-2,6-diaminopimelate from (S)-tetrahydrodipicolinate (aminotransferase route): step 1/1. Functionally, involved in the synthesis of meso-diaminopimelate (m-DAP or DL-DAP), required for both lysine and peptidoglycan biosynthesis. Catalyzes the direct conversion of tetrahydrodipicolinate to LL-diaminopimelate. This chain is LL-diaminopimelate aminotransferase, found in Lachnoclostridium phytofermentans (strain ATCC 700394 / DSM 18823 / ISDg) (Clostridium phytofermentans).